A 299-amino-acid polypeptide reads, in one-letter code: GTPase Era (299 aa).

An Era-type G domain is found at 4–171 (KSGFVAILGR…VDILSENLDE (168 aa)). The tract at residues 12–19 (GRPNVGKS) is G1. 12–19 (GRPNVGKS) serves as a coordination point for GTP. Residues 38–42 (QTTRN) form a G2 region. Residues 59–62 (DTPG) form a G3 region. Residues 59–63 (DTPGI) and 121–124 (NKID) each bind GTP. The segment at 121–124 (NKID) is G4. The G5 stretch occupies residues 150–152 (ISA). In terms of domain architecture, KH type-2 spans 202–280 (TREEIPHSVA…FLETWVKVKK (79 aa)).

It belongs to the TRAFAC class TrmE-Era-EngA-EngB-Septin-like GTPase superfamily. Era GTPase family. In terms of assembly, monomer.

The protein localises to the cytoplasm. The protein resides in the cell membrane. Functionally, an essential GTPase that binds both GDP and GTP, with rapid nucleotide exchange. Plays a role in 16S rRNA processing and 30S ribosomal subunit biogenesis and possibly also in cell cycle regulation and energy metabolism. This chain is GTPase Era, found in Streptococcus pneumoniae (strain Hungary19A-6).